Reading from the N-terminus, the 250-residue chain is MKVVAQEEIAPAIFELVLEGEMVEAMRAGQFLHLRVPDDAHLLRRPISISSIDKANKQCHLIYRIDGAGTAIFSTLSQGDTLDVMGPQGNGFDLSDLDEQNQVLLVGGGIGVPPLLEVAKELHERGVKVVTVLGFANKDAVILKTELAQYGQVFVTTDDGSYGIKGNVSVVINDLDSQFDAVYSCGAPGMMKYINQTFDDHPRAYLSLESRMACGMGACYACVLKVPENETVSQRVCEDGPVFRTGTVVL.

In terms of domain architecture, FAD-binding FR-type spans 1–94 (MKVVAQEEIA…MGPQGNGFDL (94 aa)). FAD-binding positions include 45-48 (RPIS), 62-64 (IYR), and 69-70 (GT). Residues Cys-214, Cys-219, Cys-222, and Cys-237 each contribute to the [2Fe-2S] cluster site.

It belongs to the PyrK family. Heterotetramer of 2 PyrK and 2 PyrD type B subunits. [2Fe-2S] cluster is required as a cofactor. FAD serves as cofactor.

It participates in pyrimidine metabolism; UMP biosynthesis via de novo pathway; orotate from (S)-dihydroorotate (NAD(+) route): step 1/1. Its function is as follows. Responsible for channeling the electrons from the oxidation of dihydroorotate from the FMN redox center in the PyrD type B subunit to the ultimate electron acceptor NAD(+). The polypeptide is Dihydroorotate dehydrogenase B (NAD(+)), electron transfer subunit (Streptococcus pneumoniae serotype 4 (strain ATCC BAA-334 / TIGR4)).